A 198-amino-acid polypeptide reads, in one-letter code: Holliday junction resolvase RecU (198 aa).

The segment at 1–22 (MVNYPHKVSSQKRQTSLSQPKN) is disordered. Residues 11-22 (QKRQTSLSQPKN) show a composition bias toward polar residues. Residues Thr81, Asp83, Glu96, and Gln115 each coordinate Mg(2+).

This sequence belongs to the RecU family. Requires Mg(2+) as cofactor.

Its subcellular location is the cytoplasm. It carries out the reaction Endonucleolytic cleavage at a junction such as a reciprocal single-stranded crossover between two homologous DNA duplexes (Holliday junction).. Its function is as follows. Endonuclease that resolves Holliday junction intermediates in genetic recombination. Cleaves mobile four-strand junctions by introducing symmetrical nicks in paired strands. Promotes annealing of linear ssDNA with homologous dsDNA. Required for DNA repair, homologous recombination and chromosome segregation. The sequence is that of Holliday junction resolvase RecU from Streptococcus pneumoniae (strain P1031).